We begin with the raw amino-acid sequence, 120 residues long: uncharacterized protein (120 aa).

Residues 3 to 120 form the N-acetyltransferase domain; the sequence is IRYKKAFEKI…EKCEICHGSE (118 aa).

This is an uncharacterized protein from Bacillus methanolicus.